We begin with the raw amino-acid sequence, 105 residues long: Integration host factor (105 aa).

Positions Leu-64 to Lys-71 match the H2TH motif, binds DNA motif. The segment at Ala-82 to Gln-94 is lid, binds DNA.

This sequence belongs to the actinobacterial IHF (aIHF) family. Binds DNA as a monomer. In terms of assembly, (Microbial infection) Forms a complex with L5 Int and attP DNA. The complex binds attB to form products.

The protein resides in the cytoplasm. It is found in the nucleoid. Its function is as follows. A nucleoid-associated protein (NAP) that binds DNA without any sequence specificity. Compacts DNA. Binds along the whole chromosome in a dynamic manner, has equal affinity for the oriC site, attB and a randon 62% GC-rich sequence. Plays a role in transcription regulation. In terms of biological role, (Microbial infection) Stimulates temperate Mycobacterium phage L5 Int-mediated recombination in vitro using supercoiled attP (phage attachment site) DNA, linear attB DNA (bacterial attachment site) and L5 integrase (L5 Int or Int-L5, AC P22884). mIHF acts on L5 Int to stimulate formation of a specific intasome complex. mIHF probably stabilizes a sharp bend in the DNA during phage integration. The protein is Integration host factor of Mycolicibacterium smegmatis (strain ATCC 700084 / mc(2)155) (Mycobacterium smegmatis).